We begin with the raw amino-acid sequence, 369 residues long: tRNA pseudouridine synthase D (369 aa).

The active-site Nucleophile is the D80. Positions 156 to 318 constitute a TRUD domain; it reads GIPNWFGEQR…LKQERRALRL (163 aa).

This sequence belongs to the pseudouridine synthase TruD family.

It catalyses the reaction uridine(13) in tRNA = pseudouridine(13) in tRNA. Its function is as follows. Responsible for synthesis of pseudouridine from uracil-13 in transfer RNAs. This is tRNA pseudouridine synthase D from Xanthomonas oryzae pv. oryzae (strain KACC10331 / KXO85).